A 559-amino-acid polypeptide reads, in one-letter code: Formate--tetrahydrofolate ligase (559 aa).

66–73 provides a ligand contact to ATP; it reads TPPGEGKT.

Belongs to the formate--tetrahydrofolate ligase family.

The catalysed reaction is (6S)-5,6,7,8-tetrahydrofolate + formate + ATP = (6R)-10-formyltetrahydrofolate + ADP + phosphate. It functions in the pathway one-carbon metabolism; tetrahydrofolate interconversion. This chain is Formate--tetrahydrofolate ligase, found in Nocardioides sp. (strain ATCC BAA-499 / JS614).